A 463-amino-acid chain; its full sequence is L-seryl-tRNA(Sec) selenium transferase (463 aa).

Lysine 295 carries the N6-(pyridoxal phosphate)lysine modification.

The protein belongs to the SelA family. As to quaternary structure, homodecamer; pentamer of dimers. Binds only one seryl-tRNA(Sec) per dimer. Requires pyridoxal 5'-phosphate as cofactor.

The protein localises to the cytoplasm. It catalyses the reaction L-seryl-tRNA(Sec) + selenophosphate + H(+) = L-selenocysteinyl-tRNA(Sec) + phosphate. It participates in aminoacyl-tRNA biosynthesis; selenocysteinyl-tRNA(Sec) biosynthesis; selenocysteinyl-tRNA(Sec) from L-seryl-tRNA(Sec) (bacterial route): step 1/1. Converts seryl-tRNA(Sec) to selenocysteinyl-tRNA(Sec) required for selenoprotein biosynthesis. In Shigella dysenteriae serotype 1 (strain Sd197), this protein is L-seryl-tRNA(Sec) selenium transferase.